The primary structure comprises 313 residues: Porphobilinogen deaminase (313 aa).

Cys-242 carries the post-translational modification S-(dipyrrolylmethanemethyl)cysteine.

The protein belongs to the HMBS family. As to quaternary structure, monomer. Requires dipyrromethane as cofactor.

It catalyses the reaction 4 porphobilinogen + H2O = hydroxymethylbilane + 4 NH4(+). Its pathway is porphyrin-containing compound metabolism; protoporphyrin-IX biosynthesis; coproporphyrinogen-III from 5-aminolevulinate: step 2/4. In terms of biological role, tetrapolymerization of the monopyrrole PBG into the hydroxymethylbilane pre-uroporphyrinogen in several discrete steps. This chain is Porphobilinogen deaminase, found in Yersinia pseudotuberculosis serotype IB (strain PB1/+).